A 138-amino-acid polypeptide reads, in one-letter code: Acidic phospholipase A2 Cvv-E6a (138 aa).

An N-terminal signal peptide occupies residues 1-16 (MRTLWIVAVLLLGVEG). 7 disulfide bridges follow: C42–C131, C44–C60, C59–C111, C65–C138, C66–C104, C73–C97, and C91–C102. 3 residues coordinate Ca(2+): Y43, G45, and G47. Residue H63 is part of the active site. D64 is a Ca(2+) binding site. D105 is a catalytic residue.

This sequence belongs to the phospholipase A2 family. Group II subfamily. D49 sub-subfamily. Requires Ca(2+) as cofactor. As to expression, expressed by the venom gland.

Its subcellular location is the secreted. It carries out the reaction a 1,2-diacyl-sn-glycero-3-phosphocholine + H2O = a 1-acyl-sn-glycero-3-phosphocholine + a fatty acid + H(+). In terms of biological role, snake venom phospholipase A2 (PLA2) that significantly inhibits ADP-induced platelet aggregation in platelet-rich plasma of human, rabbit and guinea pig. PLA2 catalyzes the calcium-dependent hydrolysis of the 2-acyl groups in 3-sn-phosphoglycerides. The protein is Acidic phospholipase A2 Cvv-E6a of Crotalus viridis viridis (Prairie rattlesnake).